A 248-amino-acid chain; its full sequence is Large ribosomal subunit protein uL4 (248 aa).

The disordered stretch occupies residues 45 to 105 (PYGADPYAGM…KDQSKSVNTK (61 aa)). Positions 92–105 (PKAEKDQSKSVNTK) are enriched in basic and acidic residues.

This sequence belongs to the universal ribosomal protein uL4 family. In terms of assembly, part of the 50S ribosomal subunit.

Its function is as follows. One of the primary rRNA binding proteins, this protein initially binds near the 5'-end of the 23S rRNA. It is important during the early stages of 50S assembly. It makes multiple contacts with different domains of the 23S rRNA in the assembled 50S subunit and ribosome. Functionally, forms part of the polypeptide exit tunnel. The polypeptide is Large ribosomal subunit protein uL4 (Haloquadratum walsbyi (strain DSM 16790 / HBSQ001)).